We begin with the raw amino-acid sequence, 168 residues long: Sec-independent protein translocase protein TatB (168 aa).

The chain crosses the membrane as a helical span at residues 1–21 (MIDLGISKLALIGAVALIVIG).

This sequence belongs to the TatB family. The Tat system comprises two distinct complexes: a TatABC complex, containing multiple copies of TatA, TatB and TatC subunits, and a separate TatA complex, containing only TatA subunits. Substrates initially bind to the TatABC complex, which probably triggers association of the separate TatA complex to form the active translocon.

It is found in the cell inner membrane. Its function is as follows. Part of the twin-arginine translocation (Tat) system that transports large folded proteins containing a characteristic twin-arginine motif in their signal peptide across membranes. Together with TatC, TatB is part of a receptor directly interacting with Tat signal peptides. TatB may form an oligomeric binding site that transiently accommodates folded Tat precursor proteins before their translocation. This Cupriavidus pinatubonensis (strain JMP 134 / LMG 1197) (Cupriavidus necator (strain JMP 134)) protein is Sec-independent protein translocase protein TatB.